A 216-amino-acid polypeptide reads, in one-letter code: Uracil phosphoribosyltransferase (216 aa).

Residues arginine 30, arginine 39, 73–76 (ASKI), and lysine 75 each bind GTP. Arginine 83 provides a ligand contact to 5-phospho-alpha-D-ribose 1-diphosphate. Lysine 100 serves as a coordination point for GTP. Arginine 108 contributes to the 5-phospho-alpha-D-ribose 1-diphosphate binding site. Position 129 (arginine 129) interacts with GTP. 5-phospho-alpha-D-ribose 1-diphosphate is bound by residues aspartate 135 and 135-143 (DPMLATGGT). A D-ribose 5-phosphate-binding site is contributed by tyrosine 199. Uracil-binding positions include isoleucine 200 and 205–207 (GDF). Aspartate 206 is a 5-phospho-alpha-D-ribose 1-diphosphate binding site.

Belongs to the UPRTase family. Mg(2+) serves as cofactor.

It carries out the reaction UMP + diphosphate = 5-phospho-alpha-D-ribose 1-diphosphate + uracil. It functions in the pathway pyrimidine metabolism; UMP biosynthesis via salvage pathway; UMP from uracil: step 1/1. Its activity is regulated as follows. Allosterically activated by GTP. Catalyzes the conversion of uracil and 5-phospho-alpha-D-ribose 1-diphosphate (PRPP) to UMP and diphosphate. The polypeptide is Uracil phosphoribosyltransferase (uprt) (Dictyostelium discoideum (Social amoeba)).